The chain runs to 77 residues: Protein IDA (77 aa).

Positions 1 to 26 (MAPCRTMMVLLCFVLFLAASSSCVAA) are cleaved as a signal peptide. An RLK5-binding region spans residues 56–69 (GVPIPPSAPSKRHN).

Interaction with RLK5. As to expression, expressed specifically in the floral abscission zone.

The protein localises to the secreted. Its subcellular location is the extracellular space. Its function is as follows. Involved in an ethylene-independent separation step of floral abscission. Promotes abscission zone (AZ) cells rounding. May act with RLK5 and HSL2 as ligand-receptor pairs. The chain is Protein IDA from Arabidopsis thaliana (Mouse-ear cress).